We begin with the raw amino-acid sequence, 222 residues long: MDGYALFYLVGALRDGSVYRYSRNYYVIWYSSNKDYLERVIVSKLRILGFHNVRVYQYKRGAYRVRISSKQLFHILVNQFEHPLSTSSRKTPWPTPQRVKDGPLALQIEYVKGFVDAEGSVIKSSKGVQVDVSQQIMEPLKFLAQVLEKVGVKVTGIYLGSDGVWRLRIASLASLRRFAHYIGFRHPCKSKKLNELLGRPLPGPSKLKGIGGGAPQGVEPAA.

As to quaternary structure, probably functions as a monomer. Mg(2+) is required as a cofactor. It depends on Mn(2+) as a cofactor.

Functionally, endonuclease involved in 16S rRNA intron I-alpha homing. Recognizes the minimal target 5'-GCAAGGCTGAAACTTAAAGG-3'; generates 4 base 3' protruding ends 5'-AAAC-3' and 5'-GTTT-3'. The chain is Homing endonuclease I-ApeI (apeI) from Aeropyrum pernix (strain ATCC 700893 / DSM 11879 / JCM 9820 / NBRC 100138 / K1).